We begin with the raw amino-acid sequence, 308 residues long: Testis-specific Y-encoded protein 1 (308 aa).

The protein belongs to the nucleosome assembly protein (NAP) family. Phosphorylated. As to expression, specifically expressed in testicular tissues. Isoform 1 and isoform 2 are expressed in spermatogonia and spermatocytes. Found in early testicular carcinoma in situ, spermatogonial cells in testicular tissues of 46,X,Y female and in prostate cancer cell lines.

Its subcellular location is the cytoplasm. It localises to the nucleus. In terms of biological role, may be involved in sperm differentiation and proliferation. The polypeptide is Testis-specific Y-encoded protein 1 (TSPY1) (Homo sapiens (Human)).